Reading from the N-terminus, the 526-residue chain is Tyrosine-protein kinase transforming protein Src (526 aa).

The tract at residues 1–57 (MGSSKSKPKDPSQRRCSLEPPDSTHHGGFPASQTPNKTAAPDTHRTPSRSFGTVATE) is disordered. Gly-2 carries N-myristoyl glycine; by host lipidation. Basic and acidic residues predominate over residues 7-25 (KPKDPSQRRCSLEPPDSTH). An SH3 domain is found at 81 to 142 (GGVTTFVALY…PSNYVAPSDS (62 aa)). The SH2 domain occupies 148–245 (WYFGKITRRE…GLCHRLTNVC (98 aa)). One can recognise a Protein kinase domain in the interval 267-517 (LRLEVKLGQG…TFEYLQAQLL (251 aa)). ATP-binding positions include 273–281 (LGQGCFGEV) and Lys-295. The active-site Proton acceptor is the Asp-386. Tyr-416 bears the Phosphotyrosine; by autocatalysis mark.

Belongs to the protein kinase superfamily. Tyr protein kinase family. SRC subfamily. Post-translationally, the phosphorylated form is termed pp60v-src.

The catalysed reaction is L-tyrosyl-[protein] + ATP = O-phospho-L-tyrosyl-[protein] + ADP + H(+). In terms of biological role, this phosphoprotein, required for both the initiation and the maintenance of neoplastic transformation, is a protein kinase that catalyzes the phosphorylation of tyrosine residues in vitro. The chain is Tyrosine-protein kinase transforming protein Src (V-SRC) from Galliformes.